A 149-amino-acid chain; its full sequence is MADELTVDIVTPDERSFQGPANGVRAPGIEGSFEVREDHAPMIAAFGIGPLIVKTQAAHEYADMHNDRIIFATSGGFLEVIDNKVTVLAETVEPASEIDVERAESAEERAKRRLEEGVQEEERETHEAARDRARNRLRVAMGKVGTRQS.

2 stretches are compositionally biased toward basic and acidic residues: residues 99-116 (DVERAESAEERAKRRLEE) and 123-134 (RETHEAARDRAR). The tract at residues 99 to 149 (DVERAESAEERAKRRLEEGVQEEERETHEAARDRARNRLRVAMGKVGTRQS) is disordered.

It belongs to the ATPase epsilon chain family. In terms of assembly, F-type ATPases have 2 components, CF(1) - the catalytic core - and CF(0) - the membrane proton channel. CF(1) has five subunits: alpha(3), beta(3), gamma(1), delta(1), epsilon(1). CF(0) has three main subunits: a, b and c.

It localises to the cell inner membrane. Functionally, produces ATP from ADP in the presence of a proton gradient across the membrane. This Salinibacter ruber (strain DSM 13855 / M31) protein is ATP synthase epsilon chain.